The sequence spans 1405 residues: DNA-directed RNA polymerase subunit beta' (1405 aa).

The Zn(2+) site is built by cysteine 70, cysteine 72, cysteine 85, and cysteine 88. Mg(2+)-binding residues include aspartate 460, aspartate 462, and aspartate 464. The Zn(2+) site is built by cysteine 814, cysteine 888, cysteine 895, and cysteine 898.

It belongs to the RNA polymerase beta' chain family. The RNAP catalytic core consists of 2 alpha, 1 beta, 1 beta' and 1 omega subunit. When a sigma factor is associated with the core the holoenzyme is formed, which can initiate transcription. It depends on Mg(2+) as a cofactor. Requires Zn(2+) as cofactor.

The enzyme catalyses RNA(n) + a ribonucleoside 5'-triphosphate = RNA(n+1) + diphosphate. Its function is as follows. DNA-dependent RNA polymerase catalyzes the transcription of DNA into RNA using the four ribonucleoside triphosphates as substrates. The polypeptide is DNA-directed RNA polymerase subunit beta' (Shewanella baltica (strain OS223)).